A 282-amino-acid chain; its full sequence is Flagellin (282 aa).

The protein belongs to the bacterial flagellin family.

It localises to the secreted. Its subcellular location is the bacterial flagellum. Functionally, flagellin is the subunit protein which polymerizes to form the filaments of bacterial flagella. The flagellum is required to cause a persistent disease in a murine model of infection. The polypeptide is Flagellin (fliC) (Brucella melitensis biotype 1 (strain ATCC 23456 / CCUG 17765 / NCTC 10094 / 16M)).